We begin with the raw amino-acid sequence, 370 residues long: MVSQNVVVSDAKTGIITVSTVSNSSVFTPTAQKPPTAPGYISVSKKKLLKNLEINGADQSQRLNSWVDSMRASSPTHLKSLSSFSSEEEHNSWIKRHPSALNMFERIIEEARGKQIVMFLDYDGTLSPIVDDPDRAFMTSKMRRTVKKMAKCFPTSIVTGRCIDKVYSFVKLAELYYAGSHGMDIKGPTKGFSRYNKDKPSVLYQPAGDFLPMIDEVYKQLVEKTKSTPGAKVENNKFCLSVHFRCVDEKKWSELASKVRSVVKNYPTLKLSQGRKVFEIRPIIKWNKGKALEFLLESLGFENCNDVFPIYIGDDKTDEDAFKLLRGRGQGFGILVSKFPKDTSASYSLQDPPEVMNFLGRLVEWKQMQQ.

This sequence belongs to the trehalose phosphatase family. Requires a divalent metal cation as cofactor.

It catalyses the reaction alpha,alpha-trehalose 6-phosphate + H2O = alpha,alpha-trehalose + phosphate. It participates in glycan biosynthesis; trehalose biosynthesis. In terms of biological role, removes the phosphate from trehalose 6-phosphate to produce free trehalose. Trehalose accumulation in plant may improve abiotic stress tolerance. The sequence is that of Probable trehalose-phosphate phosphatase J (TPPJ) from Arabidopsis thaliana (Mouse-ear cress).